The chain runs to 157 residues: Phospholipase A2 phaiodactylipin (157 aa).

The Ca(2+) site is built by Trp-34 and Gly-36. Intrachain disulfides connect Cys-35/Cys-56, Cys-55/Cys-94, Cys-62/Cys-87, Cys-85/Cys-127, and Cys-132/Cys-143. N-linked (GlcNAc...) asparagine glycosylation occurs at Asn-43. Residue His-59 is part of the active site. Residue Asp-60 participates in Ca(2+) binding. The active site involves Asp-88. An N-linked (GlcNAc...) asparagine glycan is attached at Asn-101. Positions 134 to 139 (DEKSAR) are cleaved as a propeptide — removed in mature form. N-linked (GlcNAc...) asparagine glycosylation is present at Asn-153.

The protein belongs to the phospholipase A2 family. Group III subfamily. In terms of assembly, heterodimer composed of a small subunit and a large subunit; disulfide-linked. Ca(2+) serves as cofactor. As to expression, expressed by the venom gland.

The protein localises to the secreted. The enzyme catalyses a 1,2-diacyl-sn-glycero-3-phosphocholine + H2O = a 1-acyl-sn-glycero-3-phosphocholine + a fatty acid + H(+). Functionally, scorpion venom phospholipase A2 (PLA2) that is lethal to crickets and crustaceae. Causes inflammation in mice and lysis of human erythrocytes. Has a mild anticoagulant effect on human platelets. PLA2 catalyzes the calcium-dependent hydrolysis of the 2-acyl groups in 3-sn-phosphoglycerides. This Anuroctonus phaiodactylus (Mafia scorpion) protein is Phospholipase A2 phaiodactylipin.